A 172-amino-acid chain; its full sequence is Translationally-controlled tumor protein homolog (172 aa).

The region spanning 1-172 is the TCTP domain; sequence MIIYRDCISQ…FKDGLEIEKC (172 aa). The residue at position 46 (Ser46) is a Phosphoserine; by PLK1.

It belongs to the TCTP family.

Its subcellular location is the cytoplasm. Functionally, involved in calcium binding and microtubule stabilization. This chain is Translationally-controlled tumor protein homolog (TPT1), found in Gallus gallus (Chicken).